A 100-amino-acid polypeptide reads, in one-letter code: UPF0213 protein YhbQ (100 aa).

The 76-residue stretch at 2 to 77 (TPWFLYLIRT…KQLTKRQKER (76 aa)) folds into the GIY-YIG domain.

Belongs to the UPF0213 family.

The polypeptide is UPF0213 protein YhbQ (Escherichia coli O7:K1 (strain IAI39 / ExPEC)).